The chain runs to 161 residues: Disulfide bond formation protein B (161 aa).

The Cytoplasmic segment spans residues 1–8 (MQANSRAY). A helical transmembrane segment spans residues 9–25 (FLLIALVSFGLVGVALY). Residues 26–43 (LQFEKGYQPCPLCVMQRF) are Periplasmic-facing. C35 and C38 form a disulfide bridge. Residues 44-58 (AFIGIGIFSLLAAVA) form a helical membrane-spanning segment. Residues 59–63 (QNTRS) are Cytoplasmic-facing. The helical transmembrane segment at 64–81 (LWQGLGMLSGIAGIAVAV) threads the bilayer. At 82–136 (YHVSLLLNPKASCGIDPLENWVNALPTAKALPQVFYADGLCTAPLPPVLGLSVPA) the chain is on the periplasmic side. C94 and C122 are disulfide-bonded. A helical membrane pass occupies residues 137 to 155 (WSLIWLFILTLTLAVGLIR). Residues 156–161 (REKNFR) lie on the Cytoplasmic side of the membrane.

This sequence belongs to the DsbB family.

It localises to the cell inner membrane. Functionally, required for disulfide bond formation in some periplasmic proteins. Acts by oxidizing the DsbA protein. This chain is Disulfide bond formation protein B, found in Cupriavidus necator (strain ATCC 17699 / DSM 428 / KCTC 22496 / NCIMB 10442 / H16 / Stanier 337) (Ralstonia eutropha).